The following is a 727-amino-acid chain: Glucans biosynthesis glucosyltransferase H (727 aa).

The disordered stretch occupies residues 18–43; that stretch reads SAMPNERPGAMEPQSLSQMPEGFPRR. The next 7 membrane-spanning stretches (helical) occupy residues 58–78, 94–114, 278–298, 408–428, 460–480, 496–516, and 572–592; these read FFVV…MGAV, LFAI…AGFF, LQQF…GWWV, IMAY…LMLA, LFYI…LLLL, ILSV…MMFI, and LLAW…ISAW.

It belongs to the glycosyltransferase 2 family. OpgH subfamily.

It localises to the cell inner membrane. Its pathway is glycan metabolism; osmoregulated periplasmic glucan (OPG) biosynthesis. Functionally, involved in the biosynthesis of osmoregulated periplasmic glucans (OPGs). The sequence is that of Glucans biosynthesis glucosyltransferase H from Shewanella sp. (strain ANA-3).